The chain runs to 424 residues: Probable methyltransferase EP424R (424 aa).

Residues 104-316 (QIVTNAWLKM…TYIVGKNRLR (213 aa)) form the Adrift-type SAM-dependent 2'-O-MTase domain. Residues Gly-136 and Asp-229 each contribute to the S-adenosyl-L-methionine site. Catalysis depends on Lys-269, which acts as the Proton acceptor.

The protein resides in the virion. The protein is Probable methyltransferase EP424R of African swine fever virus (strain Badajoz 1971 Vero-adapted) (Ba71V).